The primary structure comprises 116 residues: Ribosome-binding factor A (116 aa).

It belongs to the RbfA family. In terms of assembly, monomer. Binds 30S ribosomal subunits, but not 50S ribosomal subunits or 70S ribosomes.

The protein resides in the cytoplasm. One of several proteins that assist in the late maturation steps of the functional core of the 30S ribosomal subunit. Associates with free 30S ribosomal subunits (but not with 30S subunits that are part of 70S ribosomes or polysomes). Required for efficient processing of 16S rRNA. May interact with the 5'-terminal helix region of 16S rRNA. This is Ribosome-binding factor A from Streptococcus pneumoniae (strain ATCC BAA-255 / R6).